The chain runs to 153 residues: 3-hydroxyacyl-[acyl-carrier-protein] dehydratase FabZ (153 aa).

His-52 is a catalytic residue.

The protein belongs to the thioester dehydratase family. FabZ subfamily.

It is found in the cytoplasm. The catalysed reaction is a (3R)-hydroxyacyl-[ACP] = a (2E)-enoyl-[ACP] + H2O. In terms of biological role, involved in unsaturated fatty acids biosynthesis. Catalyzes the dehydration of short chain beta-hydroxyacyl-ACPs and long chain saturated and unsaturated beta-hydroxyacyl-ACPs. This Magnetococcus marinus (strain ATCC BAA-1437 / JCM 17883 / MC-1) protein is 3-hydroxyacyl-[acyl-carrier-protein] dehydratase FabZ.